We begin with the raw amino-acid sequence, 192 residues long: Thioredoxin-like 3-2, chloroplastic (192 aa).

The transit peptide at 1–55 (MSEIVNLSSSLRSLNPKISPLVPPYRQTSSSFSRPRNFKYHSFTDKICLAAERIR) directs the protein to the chloroplast. The Thioredoxin domain maps to 66 to 191 (LQELDDSPVS…VREMIENDSI (126 aa)). Residues C110 and C113 each act as nucleophile in the active site. C110 and C113 form a disulfide bridge.

The protein belongs to the thioredoxin family.

The protein resides in the plastid. The protein localises to the chloroplast stroma. Its function is as follows. Probable thiol-disulfide oxidoreductase that may participate in various redox reactions. The sequence is that of Thioredoxin-like 3-2, chloroplastic (WCRKC2) from Arabidopsis thaliana (Mouse-ear cress).